The chain runs to 286 residues: Homoserine kinase (286 aa).

Position 78-88 (78-88 (PLARGLGSSSS)) interacts with ATP.

Belongs to the GHMP kinase family. Homoserine kinase subfamily.

It is found in the cytoplasm. It carries out the reaction L-homoserine + ATP = O-phospho-L-homoserine + ADP + H(+). The protein operates within amino-acid biosynthesis; L-threonine biosynthesis; L-threonine from L-aspartate: step 4/5. Catalyzes the ATP-dependent phosphorylation of L-homoserine to L-homoserine phosphate. The polypeptide is Homoserine kinase (Streptococcus suis (strain 98HAH33)).